A 209-amino-acid chain; its full sequence is Eukaryotic translation initiation factor 4E (209 aa).

Belongs to the eukaryotic initiation factor 4E family. EIF4F is a multi-subunit complex, the composition of which varies with external and internal environmental conditions. It is composed of at least eIF4A, eIF4E and eIF4G. eIF4E is also known to interact with other partners.

Functionally, recognizes and binds the 7-methylguanosine-containing mRNA cap during an early step in the initiation of protein synthesis and facilitates ribosome binding by inducing the unwinding of the mRNAs secondary structures. The protein is Eukaryotic translation initiation factor 4E (TIF45) of Candida glabrata (strain ATCC 2001 / BCRC 20586 / JCM 3761 / NBRC 0622 / NRRL Y-65 / CBS 138) (Yeast).